The primary structure comprises 426 residues: MVVALGLDFGTSGARAIACDFDSDRSVSVSVTFPKTSQNWPQVWREALWQLLTQIPADWRSRIERIAIDGTSGTVLLCDREGQPQTEPLLYNQACPIDLADLADWVPADHAALSSTSSLAKLWFWQQQFGALPPDWQILAQADWLSLQLHGCSQQSDYHNALKLGYSPDRERFSKNLLDSELGALLPVVHEPGVAIGPILPAIAQEFGLSPDCQICAGTTDSIAAFLASGAHQPGEAVTSLGSTIVLKLLSQVAVSDRLTGVYSHKLGGYWLTGGASNCGGATLRQFFPDTELESLSCQIDPTKKSGLDYYPLPSRGERFPIADPDRLPQLEPRPENPVQFLQGLLEGLTQVETLGYQRLQDLGATPLKRIWTAGGGAKNAVWQQLRQQAIGVPIAIAPNTEAAFGTARLAAFGLAAFHSAGLKRT.

Substrate is bound by residues aspartate 8, 12–15 (SGAR), serine 72, and aspartate 221. ATP contacts are provided by residues serine 243, glycine 281, and 376–380 (GGAKN).

Belongs to the FGGY kinase family. Requires a divalent metal cation as cofactor.

It carries out the reaction D-ribulose + ATP = D-ribulose 5-phosphate + ADP + H(+). Functionally, exhibits ATP hydrolysis without substrate. Phosphorylates D-ribulose. The polypeptide is D-ribulose kinase (Synechococcus elongatus (strain ATCC 33912 / PCC 7942 / FACHB-805) (Anacystis nidulans R2)).